The sequence spans 133 residues: UPF0102 protein Plav_3586 (133 aa).

This sequence belongs to the UPF0102 family.

This Parvibaculum lavamentivorans (strain DS-1 / DSM 13023 / NCIMB 13966) protein is UPF0102 protein Plav_3586.